The sequence spans 147 residues: 3-dehydroquinate dehydratase 1 (147 aa).

Tyr23 functions as the Proton acceptor in the catalytic mechanism. Residues Asn75, His81, and Asp88 each coordinate substrate. His101 functions as the Proton donor in the catalytic mechanism. Substrate contacts are provided by residues 102–103 (LS) and Arg112.

It belongs to the type-II 3-dehydroquinase family. As to quaternary structure, homododecamer.

It carries out the reaction 3-dehydroquinate = 3-dehydroshikimate + H2O. It participates in metabolic intermediate biosynthesis; chorismate biosynthesis; chorismate from D-erythrose 4-phosphate and phosphoenolpyruvate: step 3/7. Functionally, catalyzes a trans-dehydration via an enolate intermediate. This chain is 3-dehydroquinate dehydratase 1 (aroQ1), found in Pseudomonas aeruginosa (strain ATCC 15692 / DSM 22644 / CIP 104116 / JCM 14847 / LMG 12228 / 1C / PRS 101 / PAO1).